Consider the following 74-residue polypeptide: U-actitoxin-Bgr3a (74 aa).

The first 21 residues, 1–21 (MSAQRFLFLLVVTSLIAASLA), serve as a signal peptide directing secretion. The propeptide occupies 22 to 29 (APKDVQLT). Intrachain disulfides connect C35-C68, C37-C61, and C51-C69.

Belongs to the sea anemone type 3 (BDS) potassium channel toxin family.

The protein localises to the secreted. The protein resides in the nematocyst. Functionally, potently and selectively inhibits voltage-gated potassium channels Kv11/KCNH/ERG. Acts as a gating-modifier toxin that shifts the voltage-dependence of ERG activation in the positive direction and suppresses its current amplitudes elicited by strong depolarizing pulses that maximally activate the channels. The sequence is that of U-actitoxin-Bgr3a from Bunodosoma granuliferum (Red warty sea anemone).